The chain runs to 1129 residues: Protein LANA1 (1129 aa).

Disordered stretches follow at residues 1–988 (MAPP…PVPY) and 1110–1129 (LPLTQPGENQGPGDSPQEMT). Composition is skewed to basic and acidic residues over residues 28–41 (RSPERCDLGDDLHL) and 48–58 (VADSVDGRECG). Pro residues predominate over residues 85–104 (PVAPIPSPAPATPLPPPALL). The span at 139–156 (SPESSQRPPLSSPTGRPD) shows a compositional bias: polar residues. Over residues 161 to 185 (MRPPPSQQTTPPHSPTTPPPEPPSK) the composition is skewed to pro residues. Residues 186–197 (SSPDSLAPSTLR) are compositionally biased toward low complexity. The segment covering 207–217 (PQGPSTLNPIC) has biased composition (polar residues). Positions 263 to 275 (PISIGSSSPSEGS) are enriched in low complexity. Composition is skewed to basic and acidic residues over residues 292–301 (EASKNEKECS) and 314–323 (EISKESQVDK). Positions 324-419 (DDNDNKDDEE…DKKEDEEDGG (96 aa)) are enriched in acidic residues. Over residues 431-471 (QQQQEPQQQEPQQQEPQQQEPQQQEPQQQEPQQQEPQQQEP) the composition is skewed to low complexity. The span at 472-528 (QQREPQQREPQQREPQQREPQQREPQQREPQQREPQQREPQQREPQQREPQQREPQQ) shows a compositional bias: basic and acidic residues. The span at 529–596 (REPQQQEPQQ…QQQEPQQQDE (68 aa)) shows a compositional bias: low complexity. Residues 597-888 (QQQDEQQQDE…QELEEVEEQE (292 aa)) show a composition bias toward acidic residues. The span at 924 to 934 (THEQIASSPPG) shows a compositional bias: polar residues. The span at 962 to 979 (PGVRMRRVPVTHPKKPHP) shows a compositional bias: basic residues. The DNA-binding domain stretch occupies residues 1008 to 1129 (FLGKDGRRDP…GPGDSPQEMT (122 aa)).

In terms of assembly, homooligomer. Interacts with host BRD2. Interacts with host RELA, ELOB, ELOC and CUL5; these interactions induce the proteasomal degradation of host RELA. Interacts with host TRIM28 and NFE2L2/NRF2; these interactions are essential for the shutdown of lytic gene expression during the early stage of infection. Interacts (via N-terminus) with host histones H2A and H2B; these interactions are essential to dock LANA1 onto chromosomes. Interacts with host BUB1 and PCNA. Interacts with host NAP1L1; this interaction is required for LANA1-dependent DNA replication. Interacts with components of the host MLL1 complex KMT2A and WDR5.

It is found in the host nucleus. Functionally, multifunctional protein that plays a role in the replication and long-term persistence of the viral episomal genome in dividing cells. Binds to mitotic chromosomes via its N-terminal region and to a 16-bp imperfect palindrome within the origin of replication (oriP) located in the viral terminal repeat (TR) through its C-terminal. Tethers viral episomes to chromosomes during mitosis. Plays a critical role in the shutdown of lytic gene expression during the early stage of infection by interacting with host TRIM28. Also plays a role in the repression of host NF-kappa-B activity upon TNF-alpha stimulation by promoting the proteasomal degradation of host RELA. Promotes nuclear localization and cleavage of host STAT6 leading to constitutive activation of the IL13/STAT6 signaling pathway to promote viral latency. Interacts with and modulates the histone methyltransferase MLL1 complex activity, leading to its recruitment on viral DNA terminal repeats changing the dynamic of histone H3 methylated 'Lys-4'(H3K4me) profile during the initial hours following infection. In Homo sapiens (Human), this protein is Protein LANA1 (LANA1).